Consider the following 217-residue polypeptide: Large ribosomal subunit protein bL25 (217 aa).

The tract at residues 178–217 is disordered; that stretch reads VVAPTEEPTEEEIEAMEGEQQTEEPEVVGESKEDEEKTEE. Over residues 184 to 205 the composition is skewed to acidic residues; that stretch reads EPTEEEIEAMEGEQQTEEPEVV. Over residues 206-217 the composition is skewed to basic and acidic residues; that stretch reads GESKEDEEKTEE.

The protein belongs to the bacterial ribosomal protein bL25 family. CTC subfamily. In terms of assembly, part of the 50S ribosomal subunit; part of the 5S rRNA/L5/L18/L25 subcomplex. Contacts the 5S rRNA. Binds to the 5S rRNA independently of L5 and L18.

This is one of the proteins that binds to the 5S RNA in the ribosome where it forms part of the central protuberance. This chain is Large ribosomal subunit protein bL25, found in Staphylococcus aureus (strain USA300).